Reading from the N-terminus, the 607-residue chain is Inactive metallocarboxypeptidase ECM14 (607 aa).

The signal sequence occupies residues Met-1–Ala-21. Positions Ile-22–Pro-174 are excised as a propeptide. The Peptidase M14 domain occupies Asn-202–Leu-522. Positions 264 and 267 each coordinate Zn(2+). Residues His-264 to Glu-267, Arg-322, and Asp-339 to Arg-340 each bind substrate. Cys-333 and Cys-356 are oxidised to a cystine. N-linked (GlcNAc...) asparagine glycosylation is present at Asn-349. Zn(2+) is bound at residue His-396. A substrate-binding site is contributed by Ser-397–Tyr-398. Positions Gln-539–Arg-607 are disordered. Acidic residues predominate over residues Asn-550–Asp-571. A compositionally biased stretch (basic and acidic residues) spans Gly-573–Asn-590.

The protein belongs to the peptidase M14 family. Requires Zn(2+) as cofactor.

Its subcellular location is the vacuole. The protein localises to the secreted. Its function is as follows. Inactive carboxypeptidase that may play a role in cell wall organization and biogenesis. In Ajellomyces capsulatus (strain NAm1 / WU24) (Darling's disease fungus), this protein is Inactive metallocarboxypeptidase ECM14 (ECM14).